Reading from the N-terminus, the 121-residue chain is Ribonuclease P protein component (121 aa).

Belongs to the RnpA family. As to quaternary structure, consists of a catalytic RNA component (M1 or rnpB) and a protein subunit.

The enzyme catalyses Endonucleolytic cleavage of RNA, removing 5'-extranucleotides from tRNA precursor.. RNaseP catalyzes the removal of the 5'-leader sequence from pre-tRNA to produce the mature 5'-terminus. It can also cleave other RNA substrates such as 4.5S RNA. The protein component plays an auxiliary but essential role in vivo by binding to the 5'-leader sequence and broadening the substrate specificity of the ribozyme. In Neisseria meningitidis serogroup A / serotype 4A (strain DSM 15465 / Z2491), this protein is Ribonuclease P protein component.